Consider the following 518-residue polypeptide: Putative malate dehydrogenase 1B (518 aa).

This sequence belongs to the LDH/MDH superfamily. MDH type 2 family.

The polypeptide is Putative malate dehydrogenase 1B (MDH1B) (Homo sapiens (Human)).